The following is a 411-amino-acid chain: Adenylosuccinate synthetase (411 aa).

Residues 11-17 (GDEGKGK) and 39-41 (GHT) contribute to the GTP site. Catalysis depends on Asp12, which acts as the Proton acceptor. Mg(2+) contacts are provided by Asp12 and Gly39. Residues 12 to 15 (DEGK), 37 to 40 (NAGH), Thr121, Arg135, Gln215, Thr230, and Arg294 each bind IMP. Residue His40 is the Proton donor of the active site. 290 to 296 (TTTKRPR) lines the substrate pocket. GTP-binding positions include Arg296, 322-324 (KLD), and 400-402 (STS).

It belongs to the adenylosuccinate synthetase family. In terms of assembly, homodimer. The cofactor is Mg(2+).

Its subcellular location is the cytoplasm. It catalyses the reaction IMP + L-aspartate + GTP = N(6)-(1,2-dicarboxyethyl)-AMP + GDP + phosphate + 2 H(+). Its pathway is purine metabolism; AMP biosynthesis via de novo pathway; AMP from IMP: step 1/2. Functionally, plays an important role in the de novo pathway of purine nucleotide biosynthesis. Catalyzes the first committed step in the biosynthesis of AMP from IMP. The sequence is that of Adenylosuccinate synthetase from Helicobacter pylori (strain Shi470).